Consider the following 634-residue polypeptide: Serine/threonine kinase NLK (634 aa).

Residues Ser-240–Leu-531 enclose the Protein kinase domain. ATP is bound by residues Ile-246 to Val-254 and Lys-269. The Proton acceptor role is filled by Asp-366.

It belongs to the protein kinase superfamily. CMGC Ser/Thr protein kinase family. MAP kinase subfamily. As to quaternary structure, component of the beta-catenin-lit-1 complex (also called the lit-1/wrm-1 complex or the wrm-1/lit-1 kinase complex) at least composed of lit-1 and wrm-1. Interacts with wrm-1 (via N-terminus); the interaction is direct and activates lit-1 kinase activity which leads to the phosphorylation of pop-1. This promotes pop-1 interaction with par-5 and translocation of pop-1 from the nucleus to the cytoplasm. Interacts with pop-1 (when phosphorylated on 'Ser-118' and 'Ser-127'); the interaction is dependent on the beta-catenin-lit-1 complex. Mg(2+) serves as cofactor. Expressed in the pharynx and seam and vulval cells.

Its subcellular location is the cytoplasm. It localises to the cell cortex. The protein resides in the nucleus. It catalyses the reaction L-seryl-[protein] + ATP = O-phospho-L-seryl-[protein] + ADP + H(+). The enzyme catalyses L-threonyl-[protein] + ATP = O-phospho-L-threonyl-[protein] + ADP + H(+). Functionally, has a role in the Wnt signaling pathway controlling the asymmetry of cell divisions during embryogenesis. Operates in the AB and EMS cell lineages influencing cell specification. Required for body wall muscle development, endoderm development, pop-1 asymmetry and T-cell division asymmetry. Component of the beta-catenin-lit-1 complex which promotes the phosphorylation, down-regulation and subcellular relocation of pop-1. Regulates plp-1 nuclear localization in embryos. Plays a role in male tail tip morphogenesis. The polypeptide is Serine/threonine kinase NLK (Caenorhabditis elegans).